The sequence spans 582 residues: Aspartate--tRNA ligase (582 aa).

L-aspartate is bound at residue glutamate 174. The interval 198 to 201 (QITK) is aspartate. Position 220 (arginine 220) interacts with L-aspartate. Residues 220-222 (RDE) and glutamine 229 contribute to the ATP site. Histidine 443 is an L-aspartate binding site. Glutamate 477 is a binding site for ATP. Arginine 484 contributes to the L-aspartate binding site. ATP is bound at residue 529–532 (GLDR).

This sequence belongs to the class-II aminoacyl-tRNA synthetase family. Type 1 subfamily. Homodimer.

It is found in the cytoplasm. The catalysed reaction is tRNA(Asp) + L-aspartate + ATP = L-aspartyl-tRNA(Asp) + AMP + diphosphate. Catalyzes the attachment of L-aspartate to tRNA(Asp) in a two-step reaction: L-aspartate is first activated by ATP to form Asp-AMP and then transferred to the acceptor end of tRNA(Asp). This is Aspartate--tRNA ligase from Streptococcus pyogenes serotype M3 (strain ATCC BAA-595 / MGAS315).